The chain runs to 184 residues: NADH-quinone oxidoreductase subunit B (184 aa).

[4Fe-4S] cluster-binding residues include C37, C38, C103, and C132.

It belongs to the complex I 20 kDa subunit family. As to quaternary structure, NDH-1 is composed of 14 different subunits. Subunits NuoB, C, D, E, F, and G constitute the peripheral sector of the complex. [4Fe-4S] cluster serves as cofactor.

Its subcellular location is the cell membrane. It catalyses the reaction a quinone + NADH + 5 H(+)(in) = a quinol + NAD(+) + 4 H(+)(out). In terms of biological role, NDH-1 shuttles electrons from NADH, via FMN and iron-sulfur (Fe-S) centers, to quinones in the respiratory chain. The immediate electron acceptor for the enzyme in this species is believed to be a menaquinone. Couples the redox reaction to proton translocation (for every two electrons transferred, four hydrogen ions are translocated across the cytoplasmic membrane), and thus conserves the redox energy in a proton gradient. The chain is NADH-quinone oxidoreductase subunit B from Nocardioides sp. (strain ATCC BAA-499 / JS614).